A 201-amino-acid chain; its full sequence is Large ribosomal subunit protein uL4 (201 aa).

The tract at residues 43–73 is disordered; the sequence is TRAQKTRSEVSGGGAKPWRQKGTGRARAGTT.

It belongs to the universal ribosomal protein uL4 family. Part of the 50S ribosomal subunit.

Its function is as follows. One of the primary rRNA binding proteins, this protein initially binds near the 5'-end of the 23S rRNA. It is important during the early stages of 50S assembly. It makes multiple contacts with different domains of the 23S rRNA in the assembled 50S subunit and ribosome. Forms part of the polypeptide exit tunnel. This Colwellia psychrerythraea (strain 34H / ATCC BAA-681) (Vibrio psychroerythus) protein is Large ribosomal subunit protein uL4.